The chain runs to 105 residues: ATP synthase F(0) complex subunit a (105 aa).

The next 3 helical transmembrane spans lie at Glu-14–Ile-34, Leu-47–Met-67, and Ala-72–Ile-92.

Belongs to the ATPase A chain family. As to quaternary structure, component of the ATP synthase complex composed at least of ATP5F1A/subunit alpha, ATP5F1B/subunit beta, ATP5MC1/subunit c (homooctomer), MT-ATP6/subunit a, MT-ATP8/subunit 8, ATP5ME/subunit e, ATP5MF/subunit f, ATP5MG/subunit g, ATP5MK/subunit k, ATP5MJ/subunit j, ATP5F1C/subunit gamma, ATP5F1D/subunit delta, ATP5F1E/subunit epsilon, ATP5PF/subunit F6, ATP5PB/subunit b, ATP5PD/subunit d, ATP5PO/subunit OSCP. ATP synthase complex consists of a soluble F(1) head domain (subunits alpha(3) and beta(3)) - the catalytic core - and a membrane F(0) domain - the membrane proton channel (subunits c, a, 8, e, f, g, k and j). These two domains are linked by a central stalk (subunits gamma, delta, and epsilon) rotating inside the F1 region and a stationary peripheral stalk (subunits F6, b, d, and OSCP). Interacts with DNAJC30; interaction is direct.

Its subcellular location is the mitochondrion inner membrane. The catalysed reaction is H(+)(in) = H(+)(out). In terms of biological role, subunit a, of the mitochondrial membrane ATP synthase complex (F(1)F(0) ATP synthase or Complex V) that produces ATP from ADP in the presence of a proton gradient across the membrane which is generated by electron transport complexes of the respiratory chain. ATP synthase complex consist of a soluble F(1) head domain - the catalytic core - and a membrane F(1) domain - the membrane proton channel. These two domains are linked by a central stalk rotating inside the F(1) region and a stationary peripheral stalk. During catalysis, ATP synthesis in the catalytic domain of F(1) is coupled via a rotary mechanism of the central stalk subunits to proton translocation. With the subunit c (ATP5MC1), forms the proton-conducting channel in the F(0) domain, that contains two crucial half-channels (inlet and outlet) that facilitate proton movement from the mitochondrial intermembrane space (IMS) into the matrix. Protons are taken up via the inlet half-channel and released through the outlet half-channel, following a Grotthuss mechanism. In Salmo trutta (Brown trout), this protein is ATP synthase F(0) complex subunit a.